A 276-amino-acid chain; its full sequence is Cis-2,3-dihydrobiphenyl-2,3-diol dehydrogenase (276 aa).

9–33 contributes to the NAD(+) binding site; the sequence is LVTGGGSGLGRAIVDRFVAEGARVA. Residue Ser142 coordinates substrate. Tyr155 functions as the Proton acceptor in the catalytic mechanism.

It belongs to the short-chain dehydrogenases/reductases (SDR) family.

It catalyses the reaction (2R,3S)-3-phenylcyclohexa-3,5-diene-1,2-diol + NAD(+) = biphenyl-2,3-diol + NADH + H(+). It functions in the pathway xenobiotic degradation; biphenyl degradation; 2-hydroxy-2,4-pentadienoate and benzoate from biphenyl: step 2/4. In Pseudomonas sp. (strain KKS102), this protein is Cis-2,3-dihydrobiphenyl-2,3-diol dehydrogenase (bphB).